The chain runs to 186 residues: Threonylcarbamoyl-AMP synthase (186 aa).

In terms of domain architecture, YrdC-like spans 5–186 (TQSINDAVKC…DAITGEILRL (182 aa)).

Belongs to the SUA5 family. TsaC subfamily.

The protein localises to the cytoplasm. It catalyses the reaction L-threonine + hydrogencarbonate + ATP = L-threonylcarbamoyladenylate + diphosphate + H2O. In terms of biological role, required for the formation of a threonylcarbamoyl group on adenosine at position 37 (t(6)A37) in tRNAs that read codons beginning with adenine. Catalyzes the conversion of L-threonine, HCO(3)(-)/CO(2) and ATP to give threonylcarbamoyl-AMP (TC-AMP) as the acyladenylate intermediate, with the release of diphosphate. The polypeptide is Threonylcarbamoyl-AMP synthase (Coxiella burnetii (strain RSA 331 / Henzerling II)).